The sequence spans 453 residues: Pup--protein ligase (453 aa).

E9 provides a ligand contact to Mg(2+). R53 lines the ATP pocket. Residue Y55 participates in Mg(2+) binding. D57 functions as the Proton acceptor in the catalytic mechanism. Residue E63 coordinates Mg(2+). Positions 66 and 420 each coordinate ATP.

It belongs to the Pup ligase/Pup deamidase family. Pup-conjugating enzyme subfamily.

The enzyme catalyses ATP + [prokaryotic ubiquitin-like protein]-L-glutamate + [protein]-L-lysine = ADP + phosphate + N(6)-([prokaryotic ubiquitin-like protein]-gamma-L-glutamyl)-[protein]-L-lysine.. The protein operates within protein degradation; proteasomal Pup-dependent pathway. It functions in the pathway protein modification; protein pupylation. Functionally, catalyzes the covalent attachment of the prokaryotic ubiquitin-like protein modifier Pup to the proteasomal substrate proteins, thereby targeting them for proteasomal degradation. This tagging system is termed pupylation. The ligation reaction involves the side-chain carboxylate of the C-terminal glutamate of Pup and the side-chain amino group of a substrate lysine. The polypeptide is Pup--protein ligase (Streptomyces griseus subsp. griseus (strain JCM 4626 / CBS 651.72 / NBRC 13350 / KCC S-0626 / ISP 5235)).